Here is a 207-residue protein sequence, read N- to C-terminus: Small ribosomal subunit protein eS1 (207 aa).

Belongs to the eukaryotic ribosomal protein eS1 family.

The protein is Small ribosomal subunit protein eS1 of Methanosarcina barkeri (strain Fusaro / DSM 804).